The primary structure comprises 172 residues: Photosystem I assembly protein Ycf3 (172 aa).

TPR repeat units follow at residues 35–68 (AFSY…EEDP), 72–105 (SYIL…NSQL), and 120–153 (GVKA…SPNN).

The protein belongs to the Ycf3 family.

It is found in the plastid. The protein localises to the chloroplast thylakoid membrane. In terms of biological role, essential for the assembly of the photosystem I (PSI) complex. May act as a chaperone-like factor to guide the assembly of the PSI subunits. The polypeptide is Photosystem I assembly protein Ycf3 (Guillardia theta (Cryptophyte)).